Here is a 201-residue protein sequence, read N- to C-terminus: Probable nicotinate-nucleotide adenylyltransferase (201 aa).

Belongs to the NadD family.

It catalyses the reaction nicotinate beta-D-ribonucleotide + ATP + H(+) = deamido-NAD(+) + diphosphate. Its pathway is cofactor biosynthesis; NAD(+) biosynthesis; deamido-NAD(+) from nicotinate D-ribonucleotide: step 1/1. In terms of biological role, catalyzes the reversible adenylation of nicotinate mononucleotide (NaMN) to nicotinic acid adenine dinucleotide (NaAD). The sequence is that of Probable nicotinate-nucleotide adenylyltransferase from Clostridium botulinum (strain ATCC 19397 / Type A).